We begin with the raw amino-acid sequence, 368 residues long: UDP-N-acetylenolpyruvoylglucosamine reductase (368 aa).

One can recognise an FAD-binding PCMH-type domain in the interval 32–199; the sequence is IGGKPRSAVR…LAIELQLLTD (168 aa). Arginine 177 is a catalytic residue. The Proton donor role is filled by serine 257. Glutamate 358 is a catalytic residue.

It belongs to the MurB family. Requires FAD as cofactor.

Its subcellular location is the cytoplasm. It catalyses the reaction UDP-N-acetyl-alpha-D-muramate + NADP(+) = UDP-N-acetyl-3-O-(1-carboxyvinyl)-alpha-D-glucosamine + NADPH + H(+). It functions in the pathway cell wall biogenesis; peptidoglycan biosynthesis. Functionally, cell wall formation. The chain is UDP-N-acetylenolpyruvoylglucosamine reductase from Corynebacterium glutamicum (strain R).